Consider the following 235-residue polypeptide: Cell division protein FtsQ (235 aa).

The Cytoplasmic segment spans residues methionine 1 to arginine 6. The helical transmembrane segment at tryptophan 7–tyrosine 25 threads the bilayer. The Periplasmic segment spans residues asparagine 26–glutamate 235. A POTRA domain is found at leucine 30 to arginine 99.

Belongs to the FtsQ/DivIB family. FtsQ subfamily. Part of a complex composed of FtsB, FtsL and FtsQ.

The protein localises to the cell inner membrane. Essential cell division protein. May link together the upstream cell division proteins, which are predominantly cytoplasmic, with the downstream cell division proteins, which are predominantly periplasmic. May control correct divisome assembly. The chain is Cell division protein FtsQ from Neisseria meningitidis serogroup B (strain ATCC BAA-335 / MC58).